Consider the following 181-residue polypeptide: Translation initiation factor IF-3 (181 aa).

Belongs to the IF-3 family. Monomer.

It is found in the cytoplasm. IF-3 binds to the 30S ribosomal subunit and shifts the equilibrium between 70S ribosomes and their 50S and 30S subunits in favor of the free subunits, thus enhancing the availability of 30S subunits on which protein synthesis initiation begins. The protein is Translation initiation factor IF-3 of Pseudoalteromonas translucida (strain TAC 125).